Reading from the N-terminus, the 608-residue chain is Albumin 1 (608 aa).

Positions 1–14 are cleaved as a signal peptide; that stretch reads MQWLSVCSLLVLLS. The propeptide occupies 15 to 18; that stretch reads VLSR. 3 Albumin domains span residues 19-205, 206-398, and 402-600; these read SQAQ…TFQH, AVMK…AGSD, and KITD…KLVS. 18 disulfides stabilise this stretch: Cys-26-Cys-72, Cys-71-Cys-80, Cys-93-Cys-108, Cys-107-Cys-118, Cys-142-Cys-187, Cys-186-Cys-195, Cys-218-Cys-264, Cys-263-Cys-271, Cys-283-Cys-299, Cys-298-Cys-309, Cys-336-Cys-381, Cys-380-Cys-389, Cys-414-Cys-460, Cys-459-Cys-471, Cys-484-Cys-500, Cys-499-Cys-510, Cys-537-Cys-582, and Cys-581-Cys-590. Asn-501 carries N-linked (GlcNAc...) asparagine glycosylation.

Belongs to the ALB/AFP/VDB family. In terms of tissue distribution, plasma.

Its subcellular location is the secreted. Functionally, binds water, Ca(2+), Na(+), K(+), fatty acids, hormones, bilirubin and drugs. Its main function is the regulation of the colloidal osmotic pressure of blood. This Salmo salar (Atlantic salmon) protein is Albumin 1 (alb1).